The sequence spans 404 residues: Probable homogentisate phytyltransferase 1, chloroplastic (404 aa).

The transit peptide at 1–77 directs the protein to the chloroplast; sequence MDSLRLRPSL…SHHRIPHRPT (77 aa). The interval 68 to 96 is disordered; the sequence is SHHRIPHRPTSSSADASGQPLQSSAEAHD. Positions 76–92 are enriched in polar residues; the sequence is PTSSSADASGQPLQSSA. Transmembrane regions (helical) follow at residues 119–139, 144–164, 184–204, 216–238, 245–265, 282–302, 325–345, 348–368, and 382–402; these read TVIGTALSIVSVSLLAVENLS, LFLTGLLEAVVAALFMNIYIV, LASGEYSPATGVALVSAFAAM, PLFLALFISFILGTAYSINLPFL, VVAALCILAVRAVIVQLAFFL, LIFATAFMTFFSVVIALFKDI, VFWICVGLLEMAYCVAILMGA, ACLWSKYATVVGHAILAAILW, and ITSFYMFIWKLFYAEYLLIPL.

The protein belongs to the UbiA prenyltransferase family.

The protein resides in the plastid. It localises to the chloroplast thylakoid membrane. The enzyme catalyses phytyl diphosphate + homogentisate + H(+) = 2-methyl-6-phytyl-1,4-benzene-1,4-diol + CO2 + diphosphate. Its pathway is cofactor biosynthesis; tocopherol biosynthesis. Involved in the synthesis of tocopherol (vitamin E). Catalyzes the condensation of homogentisate and phytyl diphosphate to form dimethylphytylhydroquinone. This is Probable homogentisate phytyltransferase 1, chloroplastic (HPT1) from Oryza sativa subsp. japonica (Rice).